We begin with the raw amino-acid sequence, 412 residues long: MAASQLCFVGFLEGIRGGDRLWNAKNDCRFSQRKKMRWSFYCLFTNFNYACVSQEPEKDLKFPIYSSLVVNPVGEVAISSEQKVYDVVLKQAALVEQQLRNRTVLEEKTGTTFLLNEAYDRCGQICEEYAKTFYLGTLLMTPERRRAIWAIYVWCRRTDELVDGPNASHITPSALDRWEARLEDLFAGRPYDMLDASLSDTVVNFPVDIQPFKDMIEGMRMDLKKSRYKNFDELYLYCYYVAGTVGLMSVPVMGIDPESDATTESVYNAALSLGIANQLTNILRDVGEDTRRGRVYLPQDELAEAGLSDEDIFNGKVTDRWRNFMKNQIKRARTFFQEAEKGIAELNQASRWPVLASLLLYRQILDEIEANDYNNFTKRAYVSKAKKLMAVPVAYGRSLIRPSMKKPSLVKP.

The protein belongs to the phytoene/squalene synthase family. Monomer. Expressed in roots, leaves, flower buds, sepals, petals, lips and lip crests.

The protein resides in the plastid. It is found in the chloroplast. It catalyses the reaction 2 (2E,6E,10E)-geranylgeranyl diphosphate = 15-cis-phytoene + 2 diphosphate. Its pathway is carotenoid biosynthesis; phytoene biosynthesis; all-trans-phytoene from geranylgeranyl diphosphate: step 1/1. Its function is as follows. Catalyzes the reaction from prephytoene diphosphate to phytoene. The polypeptide is Phytoene synthase, chloroplastic (PSY) (Oncidium hybrid cultivar (Orchid)).